The following is a 430-amino-acid chain: Enolase (430 aa).

Gln-164 contacts (2R)-2-phosphoglycerate. Glu-208 functions as the Proton donor in the catalytic mechanism. Residues Asp-245, Glu-288, and Asp-315 each contribute to the Mg(2+) site. (2R)-2-phosphoglycerate is bound by residues Lys-340, Arg-369, Ser-370, and Lys-391. Catalysis depends on Lys-340, which acts as the Proton acceptor.

It belongs to the enolase family. Requires Mg(2+) as cofactor.

The protein localises to the cytoplasm. Its subcellular location is the secreted. The protein resides in the cell surface. It catalyses the reaction (2R)-2-phosphoglycerate = phosphoenolpyruvate + H2O. Its pathway is carbohydrate degradation; glycolysis; pyruvate from D-glyceraldehyde 3-phosphate: step 4/5. In terms of biological role, catalyzes the reversible conversion of 2-phosphoglycerate (2-PG) into phosphoenolpyruvate (PEP). It is essential for the degradation of carbohydrates via glycolysis. This Thermococcus onnurineus (strain NA1) protein is Enolase.